The primary structure comprises 507 residues: Cobyric acid synthase (507 aa).

Positions 259–456 (EIQIAVIKLP…LHGIFDNGTW (198 aa)) constitute a GATase cobBQ-type domain. The Nucleophile role is filled by Cys-340. Residue His-448 is part of the active site.

It belongs to the CobB/CobQ family. CobQ subfamily.

The protein operates within cofactor biosynthesis; adenosylcobalamin biosynthesis. In terms of biological role, catalyzes amidations at positions B, D, E, and G on adenosylcobyrinic A,C-diamide. NH(2) groups are provided by glutamine, and one molecule of ATP is hydrogenolyzed for each amidation. The protein is Cobyric acid synthase of Prochlorococcus marinus (strain SARG / CCMP1375 / SS120).